Consider the following 407-residue polypeptide: Multifunctional CCA protein (407 aa).

Residues G8 and R11 each contribute to the ATP site. The CTP site is built by G8 and R11. Mg(2+)-binding residues include D21 and D23. Residues R91, R137, and R140 each contribute to the ATP site. 3 residues coordinate CTP: R91, R137, and R140. The HD domain maps to T226–L327.

This sequence belongs to the tRNA nucleotidyltransferase/poly(A) polymerase family. Bacterial CCA-adding enzyme type 1 subfamily. As to quaternary structure, monomer. Can also form homodimers and oligomers. Requires Mg(2+) as cofactor. The cofactor is Ni(2+).

It carries out the reaction a tRNA precursor + 2 CTP + ATP = a tRNA with a 3' CCA end + 3 diphosphate. The enzyme catalyses a tRNA with a 3' CCA end + 2 CTP + ATP = a tRNA with a 3' CCACCA end + 3 diphosphate. Its function is as follows. Catalyzes the addition and repair of the essential 3'-terminal CCA sequence in tRNAs without using a nucleic acid template. Adds these three nucleotides in the order of C, C, and A to the tRNA nucleotide-73, using CTP and ATP as substrates and producing inorganic pyrophosphate. tRNA 3'-terminal CCA addition is required both for tRNA processing and repair. Also involved in tRNA surveillance by mediating tandem CCA addition to generate a CCACCA at the 3' terminus of unstable tRNAs. While stable tRNAs receive only 3'-terminal CCA, unstable tRNAs are marked with CCACCA and rapidly degraded. This Aromatoleum aromaticum (strain DSM 19018 / LMG 30748 / EbN1) (Azoarcus sp. (strain EbN1)) protein is Multifunctional CCA protein.